The primary structure comprises 141 residues: Large ribosomal subunit protein uL11 (141 aa).

It belongs to the universal ribosomal protein uL11 family. In terms of assembly, part of the ribosomal stalk of the 50S ribosomal subunit. Interacts with L10 and the large rRNA to form the base of the stalk. L10 forms an elongated spine to which L12 dimers bind in a sequential fashion forming a multimeric L10(L12)X complex. In terms of processing, one or more lysine residues are methylated.

Functionally, forms part of the ribosomal stalk which helps the ribosome interact with GTP-bound translation factors. This Chlorobaculum tepidum (strain ATCC 49652 / DSM 12025 / NBRC 103806 / TLS) (Chlorobium tepidum) protein is Large ribosomal subunit protein uL11.